The following is a 290-amino-acid chain: 33 kDa chaperonin (290 aa).

Intrachain disulfides connect cysteine 235/cysteine 237 and cysteine 268/cysteine 271.

It belongs to the HSP33 family. Under oxidizing conditions two disulfide bonds are formed involving the reactive cysteines. Under reducing conditions zinc is bound to the reactive cysteines and the protein is inactive.

Its subcellular location is the cytoplasm. Its function is as follows. Redox regulated molecular chaperone. Protects both thermally unfolding and oxidatively damaged proteins from irreversible aggregation. Plays an important role in the bacterial defense system toward oxidative stress. The sequence is that of 33 kDa chaperonin from Streptococcus sanguinis (strain SK36).